Here is a 669-residue protein sequence, read N- to C-terminus: Myb-like protein M (669 aa).

A disordered region spans residues 27–69 (DPSLMDDEFSDNEYDLSPKDDVPSPSKRGRGQIQNGIRRSPNK). The segment covering 30–40 (LMDDEFSDNEY) has biased composition (acidic residues). HTH myb-type domains lie at 60–118 (QNGI…SPDI) and 119–170 (RKGP…SREV). 2 DNA-binding regions (H-T-H motif) span residues 90-114 (WKRI…KRVL) and 142-166 (WKKI…KSLQ). Positions 172 to 223 (WVPKEDEVLVKKVDEMGENLSWLEVSEYLAKLKHTNTLRTALECKTRYLQLT) constitute a Myb-like domain. Disordered stretches follow at residues 226–530 (GGSI…EDNG) and 550–636 (IKNK…PHQS). 3 stretches are compositionally biased toward low complexity: residues 234–382 (NQSN…SSPS), 389–415 (NNNN…NSNN), and 450–464 (PTSL…SSPS). Positions 465 to 482 (CNNSIRQPSPSPSIKTFK) are enriched in polar residues. 3 stretches are compositionally biased toward low complexity: residues 483-521 (STIV…NNDN), 555-593 (NNNN…NSDN), and 611-636 (SNFK…PHQS).

It localises to the nucleus. This Dictyostelium discoideum (Social amoeba) protein is Myb-like protein M (mybM).